Reading from the N-terminus, the 1474-residue chain is Adhesion G protein-coupled receptor L1 (1474 aa).

The first 24 residues, 1–24 (MARLAAVLWNLCVTAVLVTSATQG), serve as a signal peptide directing secretion. At 25–858 (LSRAGLPFGL…EIYQGRINEL (834 aa)) the chain is on the extracellular side. Residues 40-129 (ACEGYPIELR…KYLEVQYDCV (90 aa)) form the SUEL-type lectin domain. Disulfide bonds link Cys-41–Cys-71, Cys-50–Cys-128, Cys-83–Cys-115, Cys-96–Cys-102, and Cys-140–Cys-322. Position 42 (Glu-42) interacts with alpha-L-rhamnose. Asn-98 carries N-linked (GlcNAc...) asparagine glycosylation. Alpha-L-rhamnose is bound at residue 117–120 (GTYK). Positions 139–398 (VCPGTLQKVL…VVRYSLEFGP (260 aa)) constitute an Olfactomedin-like domain. Residues 400–434 (DPSAGPATSPPLSTTTTARPTPLTSTASPAATTPL) are disordered. The segment covering 405 to 434 (PATSPPLSTTTTARPTPLTSTASPAATTPL) has biased composition (low complexity). Intrachain disulfides connect Cys-480–Cys-515 and Cys-503–Cys-532. N-linked (GlcNAc...) asparagine glycosylation is found at Asn-531, Asn-640, Asn-742, Asn-801, Asn-806, and Asn-827. The GAIN-B domain maps to 669 to 851 (PARFLAAKEN…AVLMAHREIY (183 aa)). 2 cysteine pairs are disulfide-bonded: Cys-802–Cys-833 and Cys-821–Cys-835. The tract at residues 802–851 (CSFWNYSERSMLGYWSTQGCRLVESNKTHTTCACSHLTNFAVLMAHREIY) is GPS. A helical membrane pass occupies residues 859-879 (LLSVITWVGIVISLVCLAICI). Residues 880–893 (STFCFLRGLQTDRN) lie on the Cytoplasmic side of the membrane. Residues 894–914 (TIHKNLCINLFLAELLFLVGI) form a helical membrane-spanning segment. The Extracellular portion of the chain corresponds to 915–920 (DKTQYE). A helical membrane pass occupies residues 921–941 (IACPIFAGLLHYFFLAAFSWL). Topologically, residues 942 to 964 (CLEGVHLYLLLVEVFESEYSRTK) are cytoplasmic. Residues 965–985 (YYYLGGYCFPALVVGIAAAID) traverse the membrane as a helical segment. Over 986-1002 (YRSYGTEKACWLRVDNY) the chain is Extracellular. Residues 1003–1023 (FIWSFIGPVSFVIVVNLVFLM) form a helical membrane-spanning segment. Residues 1024–1050 (VTLHKMIRSSSVLKPDSSRLDNIKSWA) lie on the Cytoplasmic side of the membrane. The helical transmembrane segment at 1051–1071 (LGAIALLFLLGLTWAFGLLFI) threads the bilayer. Topologically, residues 1072 to 1075 (NKES) are extracellular. The helical transmembrane segment at 1076 to 1096 (VVMAYLFTTFNAFQGVFIFVF) threads the bilayer. Over 1097–1474 (HCALQKKVHK…DGQMQLVTSL (378 aa)) the chain is Cytoplasmic. Arg-1194 carries the post-translational modification Omega-N-methylarginine. The residue at position 1220 (Ser-1220) is a Phosphoserine. 4 disordered regions span residues 1248 to 1273 (FNNSYSLRSGDFPPGDGGPEPPRGRN), 1294 to 1328 (RGSSSAAKGPPPPEPPVPPVPGGGGEEEAGGPGGA), 1360 to 1429 (ESES…SRPP), and 1451 to 1474 (YLAAPGLEGPGPDGDGQMQLVTSL). Composition is skewed to pro residues over residues 1302 to 1314 (GPPPPEPPVPPVP) and 1408 to 1420 (ALPPPPPAPPGPP). Ser-1473 carries the post-translational modification Phosphoserine.

This sequence belongs to the G-protein coupled receptor 2 family. Adhesion G-protein coupled receptor (ADGR) subfamily. Forms a heterodimer, consisting of a large extracellular region (p120) non-covalently linked to a seven-transmembrane moiety (p85). Interacts with syntaxin and with proteins of the SHANK family via the PDZ domain. Interacts (via extracellular domain) with FLRT1, FLRT2 and FLRT3 (via extracellular domain). Autoproteolytically cleaved into 2 subunits, an extracellular subunit and a seven-transmembrane subunit. This proteolytic processing takes place early in the biosynthetic pathway, either in the endoplasmic reticulum or in the early compartment of the Golgi apparatus.

It localises to the cell membrane. It is found in the cell projection. The protein resides in the axon. The protein localises to the growth cone. Its subcellular location is the synapse. It localises to the presynaptic cell membrane. It is found in the synaptosome. Functionally, calcium-independent receptor of high affinity for alpha-latrotoxin, an excitatory neurotoxin present in black widow spider venom which triggers massive exocytosis from neurons and neuroendocrine cells. Receptor for TENM2 that mediates heterophilic synaptic cell-cell contact and postsynaptic specialization. Receptor probably implicated in the regulation of exocytosis. This chain is Adhesion G protein-coupled receptor L1, found in Homo sapiens (Human).